A 449-amino-acid polypeptide reads, in one-letter code: Probable multidrug resistance protein NorM (449 aa).

Transmembrane regions (helical) follow at residues 17 to 39 (LMWP…TIMA), 54 to 76 (VGLW…PLVA), 97 to 119 (VAVS…LPIL), 129 to 151 (AGLF…ALRG), 164 to 186 (VISL…GIGP), 196 to 215 (GFAT…SYIY), 243 to 265 (LGLP…AIVL), 280 to 302 (MSVT…IRVG), 315 to 337 (LVQK…LIWF), 352 to 369 (VFDI…YQLM), 390 to 412 (MWIT…ARVA), and 417 to 439 (AGVW…MRLY).

Belongs to the multi antimicrobial extrusion (MATE) (TC 2.A.66.1) family.

It is found in the cell inner membrane. Multidrug efflux pump. The protein is Probable multidrug resistance protein NorM (norM) of Acinetobacter baylyi (strain ATCC 33305 / BD413 / ADP1).